A 330-amino-acid chain; its full sequence is MSTTINRNEKTKQVVNKTKEIKTESSQQQQQKPPISKLMGIILATRPWSLTISVTSVLVGSALAFREIREFDSIMLSIILVGAVSLQALGNVVNSFYDCKNGNDTKEKSADRTMFDFGLTEGNIINLIWYLLIQCAICLGLMIFRMDNIKCIVENILPLGAFGFILNISYTAAPIGLKYIGLGDLTIFLCFGPILVQSAFISQTHYHDSLAYFYSIPLALTIVAVLHVNNTRDIKADTEAGSITLASKLGFKNCYYIYAGLYLFAYIYLFKLSLDIDKYILNLPLILIPKIISLINQFKNKKLEDLTEKTGQLSFFFGGLNAIGVLLSMQ.

Transmembrane regions (helical) follow at residues 39–59 (MGII…SVLV), 73–93 (SIML…GNVV), 124–144 (IINL…LMIF), 156–176 (ILPL…APIG), 180–200 (IGLG…QSAF), 209–229 (SLAY…LHVN), 254–274 (CYYI…KLSL), 276–296 (IDKY…SLIN), and 310–330 (TGQL…LSMQ).

Belongs to the UbiA prenyltransferase family.

It localises to the endoplasmic reticulum membrane. The protein localises to the golgi apparatus membrane. The enzyme catalyses menadiol + (2E,6E,10E)-geranylgeranyl diphosphate = menaquinol-4 + diphosphate. It functions in the pathway quinol/quinone metabolism; menaquinone biosynthesis. In terms of biological role, prenyltransferase that mediates the formation of menaquinone-4 (MK-4), a vitamin K2 isoform. The sequence is that of UbiA prenyltransferase domain-containing protein 1 (ubiad1) from Dictyostelium discoideum (Social amoeba).